We begin with the raw amino-acid sequence, 483 residues long: Cobyric acid synthase (483 aa).

Positions 251–438 constitute a GATase cobBQ-type domain; the sequence is SLVVAVPMLP…LHGVFNADEF (188 aa). Cys333 functions as the Nucleophile in the catalytic mechanism. The active site involves His430.

This sequence belongs to the CobB/CobQ family. CobQ subfamily.

It participates in cofactor biosynthesis; adenosylcobalamin biosynthesis. Catalyzes amidations at positions B, D, E, and G on adenosylcobyrinic A,C-diamide. NH(2) groups are provided by glutamine, and one molecule of ATP is hydrogenolyzed for each amidation. This is Cobyric acid synthase from Brucella anthropi (strain ATCC 49188 / DSM 6882 / CCUG 24695 / JCM 21032 / LMG 3331 / NBRC 15819 / NCTC 12168 / Alc 37) (Ochrobactrum anthropi).